A 1013-amino-acid polypeptide reads, in one-letter code: Endosome/lysosome-associated apoptosis and autophagy regulator 1 (1013 aa).

Positions 1–41 (MAEPGHSHHLSARVRGRTERRIPRLWRLLLWAGTAFQVTQG) are cleaved as a signal peptide. Topologically, residues 42 to 910 (TGPELHACKE…ICKTIDFWLK (869 aa)) are extracellular. Residue asparagine 153 is glycosylated (N-linked (GlcNAc...) asparagine). Disulfide bonds link cysteine 278–cysteine 295, cysteine 308–cysteine 330, and cysteine 311–cysteine 342. N-linked (GlcNAc...) asparagine glycosylation is found at asparagine 404 and asparagine 672. The MRH domain maps to 656–858 (NDCTFSRNTP…LWESAAACPL (203 aa)). Intrachain disulfides connect cysteine 658–cysteine 704, cysteine 714–cysteine 739, cysteine 808–cysteine 844, and cysteine 820–cysteine 856. The chain crosses the membrane as a helical span at residues 911-931 (VGISAGTCTAILLTVLTCYFW). Topologically, residues 932-1013 (KKNQKLEYKY…TSSGGLDMDL (82 aa)) are cytoplasmic.

It belongs to the ELAPOR family. Interacts with HSPA5; may regulate the function of HSPA5 in apoptosis and cell proliferation. As to expression, expressed in normal endometrium but overexpressed in endometroid tumors.

It localises to the cell membrane. Its subcellular location is the late endosome membrane. The protein localises to the golgi apparatus. It is found in the trans-Golgi network membrane. The protein resides in the lysosome membrane. It localises to the endoplasmic reticulum membrane. Functionally, may protect cells from cell death by inducing cytosolic vacuolization and up-regulating the autophagy pathway. May play a role in apoptosis and cell proliferation through its interaction with HSPA5. This Homo sapiens (Human) protein is Endosome/lysosome-associated apoptosis and autophagy regulator 1.